Reading from the N-terminus, the 405-residue chain is Tyrosine--tRNA ligase (405 aa).

The 'HIGH' region motif lies at 46–55 (PTRPDIHLGH). The 'KMSKS' region motif lies at 230-234 (KMSKS). Lysine 233 contacts ATP. The S4 RNA-binding domain maps to 341-404 (MGLAALMVKA…GKKKFVKIVV (64 aa)).

This sequence belongs to the class-I aminoacyl-tRNA synthetase family. TyrS type 2 subfamily. Homodimer.

The protein resides in the cytoplasm. It catalyses the reaction tRNA(Tyr) + L-tyrosine + ATP = L-tyrosyl-tRNA(Tyr) + AMP + diphosphate + H(+). In terms of biological role, catalyzes the attachment of tyrosine to tRNA(Tyr) in a two-step reaction: tyrosine is first activated by ATP to form Tyr-AMP and then transferred to the acceptor end of tRNA(Tyr). The chain is Tyrosine--tRNA ligase from Bdellovibrio bacteriovorus (strain ATCC 15356 / DSM 50701 / NCIMB 9529 / HD100).